Consider the following 377-residue polypeptide: MANDQHTELETEFTLDQVKDQLIEQGKKRSSLNYKDIMEKLSPFDQDPEQMDEFYEHLGDLGIEVVNENDEEVSNLRQGEDHDGNDNDDFNFDDDLSLPPGIKINDPVRMYLKEIGRVPLLSADDEVELAKRIMNGDEEAKRRLAEANLRLVVSIAKRYVGRGMLFLDLIQEGNMGLIKAVEKFDHNKGFKFSTYATWWIRQAITRAIADQARTIRIPVHMVETINKLIRVSRQLLQELGREPTPEEIAAEMELSVEKVREIMKIAQEPVSLETPIGEEDDSHLGDFIEDQEALTPADAAAYELLKEQLEDVLDTLTEREENVLRLRFGLDDGRTRTLEEVGKVFGVTRERIRQIEAKALRKLRHPSRSKRLKDFLE.

The tract at residues 72-92 (EVSNLRQGEDHDGNDNDDFNF) is disordered. The tract at residues 144-214 (LAEANLRLVV…TRAIADQART (71 aa)) is sigma-70 factor domain-2. Residues 168 to 171 (DLIQ) carry the Interaction with polymerase core subunit RpoC motif. The tract at residues 223–299 (ETINKLIRVS…DQEALTPADA (77 aa)) is sigma-70 factor domain-3. The tract at residues 312–365 (VLDTLTEREENVLRLRFGLDDGRTRTLEEVGKVFGVTRERIRQIEAKALRKLRH) is sigma-70 factor domain-4. A DNA-binding region (H-T-H motif) is located at residues 338–357 (LEEVGKVFGVTRERIRQIEA).

Belongs to the sigma-70 factor family. RpoD/SigA subfamily. In terms of assembly, interacts transiently with the RNA polymerase catalytic core.

The protein resides in the cytoplasm. Sigma factors are initiation factors that promote the attachment of RNA polymerase to specific initiation sites and are then released. This sigma factor is the primary sigma factor during exponential growth. The sequence is that of RNA polymerase sigma factor SigA from Bacillus sp.